The sequence spans 359 residues: 4-hydroxy-3-methylbut-2-en-1-yl diphosphate synthase (flavodoxin) (359 aa).

The [4Fe-4S] cluster site is built by cysteine 264, cysteine 267, cysteine 299, and glutamate 306.

This sequence belongs to the IspG family. [4Fe-4S] cluster is required as a cofactor.

The enzyme catalyses (2E)-4-hydroxy-3-methylbut-2-enyl diphosphate + oxidized [flavodoxin] + H2O + 2 H(+) = 2-C-methyl-D-erythritol 2,4-cyclic diphosphate + reduced [flavodoxin]. The protein operates within isoprenoid biosynthesis; isopentenyl diphosphate biosynthesis via DXP pathway; isopentenyl diphosphate from 1-deoxy-D-xylulose 5-phosphate: step 5/6. Functionally, converts 2C-methyl-D-erythritol 2,4-cyclodiphosphate (ME-2,4cPP) into 1-hydroxy-2-methyl-2-(E)-butenyl 4-diphosphate. This Helicobacter pylori (strain HPAG1) protein is 4-hydroxy-3-methylbut-2-en-1-yl diphosphate synthase (flavodoxin).